Here is a 416-residue protein sequence, read N- to C-terminus: Neurotensin receptor type 2 (416 aa).

The Extracellular segment spans residues 1 to 32 (METSSPWPPRPSPSAGLSLEARLGVDTRLWAK). A helical membrane pass occupies residues 33-55 (VLFTALYSLIFAFGTAGNALSVH). Over 56–64 (VVLKARAGR) the chain is Cytoplasmic. A helical transmembrane segment spans residues 65-87 (PGRLRYHVLSLALSALLLLLVSM). Residues 88-109 (PMELYNFVWSHYPWVFGDLGCR) lie on the Extracellular side of the membrane. C108 and C194 form a disulfide bridge. Residues 110 to 131 (GYYFVRELCAYATVLSVASLSA) form a helical membrane-spanning segment. The Cytoplasmic segment spans residues 132-154 (ERCLAVCQPLRARRLLTPRRTRR). Residues 155-176 (LLSLVWVASLGLALPMAVIMGQ) traverse the membrane as a helical segment. The Extracellular segment spans residues 177–216 (KHEVESADGEPEPASRVCTVLVSRATLQVFIQVNVLVSFA). Residues 217 to 237 (LPLALTAFLNGITVNHLMALY) traverse the membrane as a helical segment. The Cytoplasmic portion of the chain corresponds to 238 to 297 (SQVPSASAQVSSIPSRLELLSEEGLLGFITWRKTLSLGVQASLVRHKDASQIRSLQHSAQ). Residues 298–318 (VLRAIVAVYVICWLPYHARRL) form a helical membrane-spanning segment. The Extracellular segment spans residues 319–337 (MYCYIPDDGWTNELYDFYH). A helical membrane pass occupies residues 338-358 (YFYMVTNTLFYVSSAVTPILY). Residues 359 to 416 (NAVSSSFRKLFLESLGSLCGEQHSLVPLPQEAPESTTSTYSFRLWGSPRNPSLGEIQV) lie on the Cytoplasmic side of the membrane. The S-palmitoyl cysteine moiety is linked to residue C377. Residue S410 is modified to Phosphoserine.

Belongs to the G-protein coupled receptor 1 family. Neurotensin receptor subfamily. NTSR2 sub-subfamily. Abundant in cortex and hypothalamus, and lower levels seen in the heart and intestine.

The protein localises to the cell membrane. Functionally, receptor for the tridecapeptide neurotensin. It is associated with G proteins that activate a phosphatidylinositol-calcium second messenger system. This Rattus norvegicus (Rat) protein is Neurotensin receptor type 2 (Ntsr2).